Here is a 325-residue protein sequence, read N- to C-terminus: tRNA dimethylallyltransferase (325 aa).

16–23 is an ATP binding site; the sequence is GPTASGKT. 18 to 23 is a binding site for substrate; sequence TASGKT. Interaction with substrate tRNA stretches follow at residues 41 to 44, 165 to 169, 253 to 258, and 286 to 293; these read DSAL, QRIQR, RCVGYR, and KRQITWLR.

It belongs to the IPP transferase family. Monomer. Mg(2+) is required as a cofactor.

It carries out the reaction adenosine(37) in tRNA + dimethylallyl diphosphate = N(6)-dimethylallyladenosine(37) in tRNA + diphosphate. Its function is as follows. Catalyzes the transfer of a dimethylallyl group onto the adenine at position 37 in tRNAs that read codons beginning with uridine, leading to the formation of N6-(dimethylallyl)adenosine (i(6)A). The protein is tRNA dimethylallyltransferase of Ralstonia pickettii (strain 12J).